The following is a 422-amino-acid chain: L-2-hydroxyglutarate dehydrogenase (422 aa).

The protein belongs to the L2HGDH family. The cofactor is FAD.

The protein resides in the cell inner membrane. It catalyses the reaction (S)-2-hydroxyglutarate + a quinone = a quinol + 2-oxoglutarate. It functions in the pathway amino-acid degradation. Catalyzes the dehydrogenation of L-2-hydroxyglutarate (L2HG) to alpha-ketoglutarate and couples to the respiratory chain by feeding electrons from the reaction into the membrane quinone pool. Functions in a L-lysine degradation pathway that proceeds via cadaverine, glutarate and L-2-hydroxyglutarate. Also displays some oxidase activity in vitro on L-2-hydroxyglutarate with O2 as the electron acceptor, but this activity is most likely not physiological. The protein is L-2-hydroxyglutarate dehydrogenase of Salmonella houtenae.